Reading from the N-terminus, the 144-residue chain is 3-dehydroquinate dehydratase (144 aa).

Tyrosine 22 (proton acceptor) is an active-site residue. Substrate is bound by residues asparagine 71, histidine 77, and aspartate 84. Catalysis depends on histidine 97, which acts as the Proton donor. Substrate is bound by residues 98–99 (IS) and arginine 108.

It belongs to the type-II 3-dehydroquinase family. Homododecamer.

It carries out the reaction 3-dehydroquinate = 3-dehydroshikimate + H2O. Its pathway is metabolic intermediate biosynthesis; chorismate biosynthesis; chorismate from D-erythrose 4-phosphate and phosphoenolpyruvate: step 3/7. Catalyzes a trans-dehydration via an enolate intermediate. In Thermotoga petrophila (strain ATCC BAA-488 / DSM 13995 / JCM 10881 / RKU-1), this protein is 3-dehydroquinate dehydratase.